Here is a 223-residue protein sequence, read N- to C-terminus: MMNIIKIDNTQSGIFLERINKYLAKIYLNENVVDVHVHDPGRLKELLFKNNKVLVKKVNSTNRKTKYDLIAAKKEKEYVLVHSMYHRYIAEKILRKKYTHLKAEVKYKNSRIDFLAEDKFWIEIKGCTLSDGNMARFPDAPTKRGTKHLEDLMELKKQGFDTFIYFLIFANANYFSPNYETDLSFSKKLEEAYSLGVKIVPLLFSLENNWIVFKREIQLIFDG.

This sequence belongs to the SfsA family.

The protein is Sugar fermentation stimulation protein homolog of Thermosipho melanesiensis (strain DSM 12029 / CIP 104789 / BI429).